Here is a 763-residue protein sequence, read N- to C-terminus: Polyribonucleotide nucleotidyltransferase (763 aa).

Mg(2+) is bound by residues D526 and D532. One can recognise a KH domain in the interval 592-651 (PRITTIKVPVDKIGEVIGPKGKMINSITEETGAQISIEDDGTVFVGAADGLSAQAAIDKI). The region spanning 663 to 732 (GERFLGTVVK…NRGKISLVLV (70 aa)) is the S1 motif domain. The interval 739–763 (SAESAGDKGAEKAEGAAADVTPAEA) is disordered. Positions 743 to 752 (AGDKGAEKAE) are enriched in basic and acidic residues.

The protein belongs to the polyribonucleotide nucleotidyltransferase family. It depends on Mg(2+) as a cofactor.

The protein localises to the cytoplasm. It catalyses the reaction RNA(n+1) + phosphate = RNA(n) + a ribonucleoside 5'-diphosphate. In terms of biological role, involved in mRNA degradation. Catalyzes the phosphorolysis of single-stranded polyribonucleotides processively in the 3'- to 5'-direction. The sequence is that of Polyribonucleotide nucleotidyltransferase from Mycolicibacterium smegmatis (strain ATCC 700084 / mc(2)155) (Mycobacterium smegmatis).